A 102-amino-acid polypeptide reads, in one-letter code: Parathymosin (102 aa).

Residues 1–102 (MSEKSVEAAA…RQKTENGASA (102 aa)) form a disordered region. Ser2 carries the N-acetylserine modification. Ser2 is subject to Phosphoserine. Lys4 is modified (N6-acetyllysine). Phosphoserine occurs at positions 5 and 13. Basic and acidic residues predominate over residues 13 to 37 (SAKDLKEKKDKVEEKAGRKERKKEV). The residue at position 15 (Lys15) is an N6-acetyllysine. Positions 38–75 (VEEEENGAEEEEEETAEDGEDDDEGDEEDEEEEEEEDE) are enriched in acidic residues. Thr52 carries the phosphothreonine modification. An N6-acetyllysine modification is found at Lys92.

This sequence belongs to the pro/parathymosin family.

Functionally, parathymosin may mediate immune function by blocking the effect of prothymosin alpha which confers resistance to certain opportunistic infections. This Rattus norvegicus (Rat) protein is Parathymosin (Ptms).